Reading from the N-terminus, the 146-residue chain is MTDKFDANDETRTVYAVVYDNDQPVSTGQFLAETKIEARLTRIVTLADYCGCGYGAKVTEALETYTRREGFYQLTIHSELTAQTFYENLGYQTYGSKYLEDGEYCQSLVKTILKWEKNMDIAMLIAIVGGLLGCYLYLTKNNEPKD.

The 120-residue stretch at 1–120 (MTDKFDANDE…TILKWEKNMD (120 aa)) folds into the N-acetyltransferase domain.

Belongs to the acetyltransferase family.

This is an uncharacterized protein from Streptococcus pyogenes serotype M6 (strain ATCC BAA-946 / MGAS10394).